Consider the following 135-residue polypeptide: Transcriptional activator protein (135 aa).

Positions 17 to 32 (KVTHRQVKKRAIRRRR) match the Nuclear localization signal motif. A zinc finger spans residues 37-54 (CGCSYYLHINCFNHGFTH). Polar residues predominate over residues 77–88 (VFHNHQAPTTTI). The disordered stretch occupies residues 77 to 117 (VFHNHQAPTTTIPAEPGHHNSPGSIQSQPEEGAGDSQMFSQ). Positions 120–135 (DLDNLTASDWSFLKGL) are transactivation.

It belongs to the geminiviridae transcriptional activator protein family. As to quaternary structure, monomer. Homodimer. Homooligomer. Self-interaction correlates with nuclear localization and efficient activation of transcription. Monomers suppress local silencing by interacting with and inactivating host adenosine kinase 2 (ADK2) in the cytoplasm. Interacts with and inhibits host SNF1 kinase. Binds to ssDNA. In terms of processing, phosphorylated.

It is found in the host nucleus. The protein localises to the host cytoplasm. Strong activator of the late viral genes promoters. Enhances the expression of the capsid protein and nuclear shuttle protein. Acts as a suppressor of RNA-mediated gene silencing, also known as post-transcriptional gene silencing (PTGS), a mechanism of plant viral defense that limits the accumulation of viral RNAs. Suppresses the host RNA silencing by inhibiting adenosine kinase 2 (ADK2), a kinase involved in a general methylation pathway. Also suppresses the host basal defense by interacting with and inhibiting SNF1 kinase, a key regulator of cell metabolism implicated in innate antiviral defense. Determines pathogenicity. The protein is Transcriptional activator protein of Hewittia sublobata (Coralbush).